A 139-amino-acid chain; its full sequence is ATP synthase epsilon chain (139 aa).

Residues 89–110 (EARAEQARAEAEARRREAQSEH) are disordered.

This sequence belongs to the ATPase epsilon chain family. As to quaternary structure, F-type ATPases have 2 components, CF(1) - the catalytic core - and CF(0) - the membrane proton channel. CF(1) has five subunits: alpha(3), beta(3), gamma(1), delta(1), epsilon(1). CF(0) has three main subunits: a, b and c.

The protein resides in the cell membrane. Functionally, produces ATP from ADP in the presence of a proton gradient across the membrane. In Chloroflexus aggregans (strain MD-66 / DSM 9485), this protein is ATP synthase epsilon chain.